The primary structure comprises 536 residues: Phosphoenolpyruvate carboxykinase (ATP) (536 aa).

Residues Arg-62, Tyr-203, and Lys-209 each coordinate substrate. ATP contacts are provided by residues Lys-209, His-228, and 244–252 (GLSGTGKTT). Lys-209 and His-228 together coordinate Mn(2+). Asp-265 is a Mn(2+) binding site. ATP is bound by residues Glu-293, Arg-329, 445–446 (RI), and Thr-451. Arg-329 contributes to the substrate binding site.

Belongs to the phosphoenolpyruvate carboxykinase (ATP) family. As to quaternary structure, monomer. It depends on Mn(2+) as a cofactor.

It localises to the cytoplasm. The catalysed reaction is oxaloacetate + ATP = phosphoenolpyruvate + ADP + CO2. It participates in carbohydrate biosynthesis; gluconeogenesis. In terms of biological role, involved in the gluconeogenesis. Catalyzes the conversion of oxaloacetate (OAA) to phosphoenolpyruvate (PEP) through direct phosphoryl transfer between the nucleoside triphosphate and OAA. The protein is Phosphoenolpyruvate carboxykinase (ATP) of Glaesserella parasuis serovar 5 (strain SH0165) (Haemophilus parasuis).